Here is a 511-residue protein sequence, read N- to C-terminus: 60 kDa neurofilament protein (511 aa).

The interval 1–32 is disordered; that stretch reads MSVTQKKTEISTTTTYEGESRPSSGMSGFSYS. The segment at 1–99 is head; the sequence is MSVTQKKTEI…KANREREKQD (99 aa). Over residues 21–30 the composition is skewed to polar residues; it reads RPSSGMSGFS. Positions 96 to 449 constitute an IF rod domain; sequence EKQDMRDLNE…KLLEGEESRV (354 aa). Residues 100-135 form a coil 1A region; that stretch reads MRDLNERFANYIEKVRFLEAQNKKLAGELEELKSKW. The linker 1 stretch occupies residues 136–145; sequence GKETSAIKEM. Residues 146 to 284 are coil 1B; sequence YETELEEARK…VHAQELKELA (139 aa). The interval 285 to 303 is linker 12; sequence ALAYRDTTAENREFWRNEL. The segment at 304–449 is coil 2; sequence AQAIRDIQQE…KLLEGEESRV (146 aa). The interval 450-511 is tail; it reads GMKQIVEQVV…EEKKSMGSSD (62 aa). The interval 479–511 is disordered; it reads GYEATGGITTTTTTSSQERRSMSEEKKSMGSSD. Low complexity predominate over residues 483–492; it reads TGGITTTTTT. Over residues 495-511 the composition is skewed to basic and acidic residues; the sequence is QERRSMSEEKKSMGSSD.

The protein belongs to the intermediate filament family.

Its function is as follows. Major squid neurofilament protein. The sequence is that of 60 kDa neurofilament protein from Doryteuthis pealeii (Longfin inshore squid).